Here is a 160-residue protein sequence, read N- to C-terminus: C-type lectin mosGCTL-1 (160 aa).

An N-terminal signal peptide occupies residues 1 to 20 (MLTKGITLILLLVLVHSSHG). Residues 23 to 140 (TPNRKFYIPS…YHWSWNDNTC (118 aa)) enclose the C-type lectin domain. Disulfide bonds link cysteine 44-cysteine 140 and cysteine 120-cysteine 140. The N-linked (GlcNAc...) asparagine glycan is linked to asparagine 76.

As to quaternary structure, interacts with putative receptor-type tyrosine-protein phosphatase mosPTP-1; the interaction probably mediates the recruitment of West Nile virus particles in complex with C-type lectin mosGCTL-1 to the cell surface. (Microbial infection) Interacts with envelope protein E and virions of West Nile virus in a calcium-dependent manner. As to expression, female salivary gland (at protein level).

It localises to the secreted. Its function is as follows. Putative lectin. Functionally, (Microbial infection) Facilitates West Nile virus infection in mosquitoes probably via capturing viral particles and presenting them to a ligand on the cell surface, thereby facilitating viral entry. In Aedes aegypti (Yellowfever mosquito), this protein is C-type lectin mosGCTL-1.